Reading from the N-terminus, the 482-residue chain is MESIKKVMVFGSGPIVIGQAAEFDFSGSQACKALKEEGIYTILVNSNPATIQTDTDMADKVYLEPLHPTIVEKIIEKERPDAILPTMGGQTGLNLALELHRRGILDKYGIKLLGSNIRTIEIAEDRELFAEAMAEINEPVTKCKAVNSVDEAVEFAEEIGYPVIVRPAFTLGGTGGGIAHNKEELIDITSKGLKYSIINQVLIDESVLGWKEFELEVMRDRKDTCIIVCGMENIDPMGIHTGESIVVSPIQTLPDEFYQKLRNAAIKIIRHLGIEGGCNIQFAVNKEMTEYRVIEVNPRVSRSSALASKATGYPIARIAAKIAIGKTLDEILNDVTKETPASFEPTLDYVVVKIPRWPFDKFKTVDKKLGTSMKSTGEVMAIGRSFEEALQKAIRSLDIGRFGIIGDGKDKDYTDEEIEEILKNPTDERIFVIAKALEKGWSVEKIVELTDIDEFFIKKIKNIVDMKKELEKLKEEIKKLNA.

The tract at residues 1-398 is carboxyphosphate synthetic domain; the sequence is MESIKKVMVF…ALQKAIRSLD (398 aa). ATP contacts are provided by Arg126, Arg166, Gly172, Gly173, Glu205, Val207, Glu212, Gly238, Ile239, His240, Gln281, and Glu295. The 195-residue stretch at 130–324 folds into the ATP-grasp domain; the sequence is AEAMAEINEP…IARIAAKIAI (195 aa). Residues Gln281, Glu295, and Asn297 each contribute to the Mg(2+) site. Residues Gln281, Glu295, and Asn297 each coordinate Mn(2+).

The protein belongs to the CarB family. Composed of two chains; the small (or glutamine) chain promotes the hydrolysis of glutamine to ammonia, which is used by the large (or ammonia) chain to synthesize carbamoyl phosphate. Tetramer of heterodimers (alpha,beta)4. Requires Mg(2+) as cofactor. The cofactor is Mn(2+).

It carries out the reaction hydrogencarbonate + L-glutamine + 2 ATP + H2O = carbamoyl phosphate + L-glutamate + 2 ADP + phosphate + 2 H(+). The catalysed reaction is hydrogencarbonate + NH4(+) + 2 ATP = carbamoyl phosphate + 2 ADP + phosphate + 2 H(+). It participates in amino-acid biosynthesis; L-arginine biosynthesis; carbamoyl phosphate from bicarbonate: step 1/1. It functions in the pathway pyrimidine metabolism; UMP biosynthesis via de novo pathway; (S)-dihydroorotate from bicarbonate: step 1/3. Functionally, large subunit of the glutamine-dependent carbamoyl phosphate synthetase (CPSase). CPSase catalyzes the formation of carbamoyl phosphate from the ammonia moiety of glutamine, carbonate, and phosphate donated by ATP, constituting the first step of 2 biosynthetic pathways, one leading to arginine and/or urea and the other to pyrimidine nucleotides. The large subunit (synthetase) binds the substrates ammonia (free or transferred from glutamine from the small subunit), hydrogencarbonate and ATP and carries out an ATP-coupled ligase reaction, activating hydrogencarbonate by forming carboxy phosphate which reacts with ammonia to form carbamoyl phosphate. The protein is Carbamoyl phosphate synthase large chain, N-terminal section (carB1) of Methanocaldococcus jannaschii (strain ATCC 43067 / DSM 2661 / JAL-1 / JCM 10045 / NBRC 100440) (Methanococcus jannaschii).